The sequence spans 449 residues: Na(+)/H(+) antiporter NhaA 2 (449 aa).

11 helical membrane-spanning segments follow: residues 32 to 52 (IEATSGAVLLLATVVALTLSN), 87 to 107 (GLMTLFFFIVALEIKREVVLG), 114 to 134 (MVALSVVAAAGGMLVPMGLYL), 145 to 165 (GWGVVMPTDTAFVIGCLALLG), 174 to 194 (VFLLSLAVVDDLAAILVVAVG), 202 to 222 (TALALGAVGLVIIRGMALLGV), 233 to 253 (AIIWLAVNASGIHATIVGVIL), 318 to 338 (WVAFGVMPLFALANAGVPITI), 347 to 367 (LAVMAGFVLGKPIGVTAFAWL), 382 to 402 (WGGLVGGALLTGIGFTMALFI), and 417 to 437 (LGILAASVVSSVAGLTLLCAL).

This sequence belongs to the NhaA Na(+)/H(+) (TC 2.A.33) antiporter family.

It localises to the cell inner membrane. The catalysed reaction is Na(+)(in) + 2 H(+)(out) = Na(+)(out) + 2 H(+)(in). Na(+)/H(+) antiporter that extrudes sodium in exchange for external protons. This Acidiphilium cryptum (strain JF-5) protein is Na(+)/H(+) antiporter NhaA 2.